Here is a 518-residue protein sequence, read N- to C-terminus: Glutamate--cysteine ligase (518 aa).

Belongs to the glutamate--cysteine ligase type 1 family. Type 1 subfamily.

It catalyses the reaction L-cysteine + L-glutamate + ATP = gamma-L-glutamyl-L-cysteine + ADP + phosphate + H(+). It participates in sulfur metabolism; glutathione biosynthesis; glutathione from L-cysteine and L-glutamate: step 1/2. This Klebsiella pneumoniae (strain 342) protein is Glutamate--cysteine ligase.